The sequence spans 544 residues: Membrane protein insertase YidC (544 aa).

6 helical membrane-spanning segments follow: residues 13-33, 321-341, 343-363, 409-429, 461-481, and 506-526; these read LSLFLIGLFMLINDIFSSWML, LWYLIQVPMQMVMQVFYDVIP, WGLSIIFLTIVVRILIFPLTF, LGGCFPIILQLPIFFALYSLV, LYFVSWTDIRILPFIMMFTQL, and MPIMFFFILYNMPSGLLIYWI.

The protein belongs to the OXA1/ALB3/YidC family. Type 1 subfamily. As to quaternary structure, interacts with the Sec translocase complex via SecD. Specifically interacts with transmembrane segments of nascent integral membrane proteins during membrane integration.

It localises to the cell inner membrane. Its function is as follows. Required for the insertion and/or proper folding and/or complex formation of integral membrane proteins into the membrane. Involved in integration of membrane proteins that insert both dependently and independently of the Sec translocase complex, as well as at least some lipoproteins. Aids folding of multispanning membrane proteins. The sequence is that of Membrane protein insertase YidC from Borreliella afzelii (strain PKo) (Borrelia afzelii).